The primary structure comprises 119 residues: Large ribosomal subunit protein bL20 (119 aa).

Belongs to the bacterial ribosomal protein bL20 family.

Its function is as follows. Binds directly to 23S ribosomal RNA and is necessary for the in vitro assembly process of the 50S ribosomal subunit. It is not involved in the protein synthesizing functions of that subunit. In Alcanivorax borkumensis (strain ATCC 700651 / DSM 11573 / NCIMB 13689 / SK2), this protein is Large ribosomal subunit protein bL20.